A 156-amino-acid chain; its full sequence is Probable succinate transporter subunit YjjB (156 aa).

4 helical membrane-spanning segments follow: residues 7-27, 54-74, 86-106, and 128-148; these read WALLQDMVLAAVPALGFAMVF, FGMNIEWASFLAAILIGIIGI, VFTVAAVIPMFPGISAYTAMI, and FLKASFIVGALSIGLSLPGIW.

It belongs to the ThrE exporter (TC 2.A.79) family. As to quaternary structure, the transporter is composed of YjjB and YjjP.

The protein localises to the cell inner membrane. In terms of biological role, involved in succinate export with YjjP. Both proteins are required for export. In Pectobacterium atrosepticum (strain SCRI 1043 / ATCC BAA-672) (Erwinia carotovora subsp. atroseptica), this protein is Probable succinate transporter subunit YjjB.